Reading from the N-terminus, the 382-residue chain is Dual-specificity RNA methyltransferase RlmN (382 aa).

Catalysis depends on Glu96, which acts as the Proton acceptor. Residues 102–342 (QGKRGTLCVS…VRTTRGEDID (241 aa)) enclose the Radical SAM core domain. Cys109 and Cys345 form a disulfide bridge. Cys116, Cys120, and Cys123 together coordinate [4Fe-4S] cluster. Residues 170–171 (GE), Ser202, 224–226 (SLH), and Asn302 contribute to the S-adenosyl-L-methionine site. Catalysis depends on Cys345, which acts as the S-methylcysteine intermediate.

Belongs to the radical SAM superfamily. RlmN family. [4Fe-4S] cluster serves as cofactor.

The protein localises to the cytoplasm. It carries out the reaction adenosine(2503) in 23S rRNA + 2 reduced [2Fe-2S]-[ferredoxin] + 2 S-adenosyl-L-methionine = 2-methyladenosine(2503) in 23S rRNA + 5'-deoxyadenosine + L-methionine + 2 oxidized [2Fe-2S]-[ferredoxin] + S-adenosyl-L-homocysteine. The catalysed reaction is adenosine(37) in tRNA + 2 reduced [2Fe-2S]-[ferredoxin] + 2 S-adenosyl-L-methionine = 2-methyladenosine(37) in tRNA + 5'-deoxyadenosine + L-methionine + 2 oxidized [2Fe-2S]-[ferredoxin] + S-adenosyl-L-homocysteine. Functionally, specifically methylates position 2 of adenine 2503 in 23S rRNA and position 2 of adenine 37 in tRNAs. m2A2503 modification seems to play a crucial role in the proofreading step occurring at the peptidyl transferase center and thus would serve to optimize ribosomal fidelity. The chain is Dual-specificity RNA methyltransferase RlmN from Pseudomonas syringae pv. tomato (strain ATCC BAA-871 / DC3000).